The following is a 422-amino-acid chain: Keratin, type II cytoskeletal 80 (422 aa).

Residues 1 to 82 (MACRSCVVGF…DPAIQQQKNN (82 aa)) form a head region. Residue S45 is modified to Phosphoserine. The interval 83-118 (EKEEMKVLNDKFASLIGKVQALEQRNQLLETRWHFL) is coil 1A. The region spanning 83-394 (EKEEMKVLND…KLMEGEESRM (312 aa)) is the IF rod domain. The segment at 119–135 (QSQDSATFDLGHLYEEY) is linker 1. The segment at 136–227 (QGRLQEELRK…SIYEQELKDL (92 aa)) is coil 1B. Residues 228–251 (AAQLKDVSVTVGMDSRCHIDLSGI) are linker 12. The coil 2 stretch occupies residues 252 to 390 (VEEVKAQYDA…ATYRKLMEGE (139 aa)). The interval 391-422 (ESRMDMPSATVVSAVQARCRTAPTLPHPLCSL) is tail.

Belongs to the intermediate filament family. In terms of assembly, heterotetramer of two type I and two type II keratins.

The sequence is that of Keratin, type II cytoskeletal 80 (KRT80) from Bos taurus (Bovine).